The chain runs to 2055 residues: Multiple PDZ domain protein (2055 aa).

An L27 domain is found at 1–63 (MLETIDKNRA…SLQQLKDQVN (63 aa)). Residues 138 to 225 (IFELLKPPCG…TVQLVIARGS (88 aa)) enclose the PDZ 1 domain. S231 bears the Phosphoserine mark. Positions 258–338 (TIELVNDGSG…RVKLMIARGA (81 aa)) constitute a PDZ 2 domain. Low complexity predominate over residues 348 to 360 (LGITLSSSTSSTS). The segment at 348–372 (LGITLSSSTSSTSEMRVDASTQKND) is disordered. 3 consecutive PDZ domains span residues 378 to 464 (DVEL…MRKG), 546 to 627 (VAHV…CRRT), and 693 to 779 (SIEL…VAKP). A phosphoserine mark is found at S783 and S1066. Positions 996-1077 (TVTIAKGSSS…IGPDIKITYV (82 aa)) constitute a PDZ 6 domain. Residues 1111–1130 (PELPEREEGEGEESELQNAA) are disordered. Residues 1139–1231 (RVELWREPSK…PVVFMVQSII (93 aa)) enclose the PDZ 7 domain. R1158 carries the omega-N-methylarginine modification. Residues 1264–1274 (LTTDQAPSQSE) show a composition bias toward polar residues. The tract at residues 1264–1299 (LTTDQAPSQSESETEKPALCNVPPSSPSVFSEMGSD) is disordered. Residues 1338–1421 (VIELEKGQSG…KVKIIFIRNA (84 aa)) enclose the PDZ 8 domain. Over residues 1435-1445 (ADSPSSTSDSP) the composition is skewed to low complexity. Residues 1435–1459 (ADSPSSTSDSPQNKEVEPCSTTSAS) form a disordered region. Positions 1471–1552 (QLELPKDQGG…TVKLTVRAEN (82 aa)) constitute a PDZ 9 domain. Positions 1557–1597 (AVPSSAVTVSGERKDNSQTPAVPAPDLEPIPSTSRSSTPAV) are disordered. PDZ domains lie at 1614–1697 (TIEI…YRDE) and 1710–1792 (TIEL…GRVK). Residues 1795-1834 (PFHSERRPSQSSQVSESSLSSFTPPLSGINTSESLESNSK) form a disordered region. Phosphoserine occurs at positions 1803 and 1809. The span at 1803–1815 (SQSSQVSESSLSS) shows a compositional bias: low complexity. The segment covering 1816-1834 (FTPPLSGINTSESLESNSK) has biased composition (polar residues). PDZ domains follow at residues 1847 to 1933 (TVEI…VAGG) and 1972 to 2055 (TITL…MVLS).

In terms of assembly, interacts with CLDN5, DLG4, GRIN1, SYNGAP1, CAMK2A and CAMK2B, HTR2A, HTR2B, HTR2C, PLEKHA1/TAPP1 and PLEKHA2/TAPP2. Interacts with F11R/JAM, CLDN1, NG2, CXADR, CRB1, MPP4 and PALS1. Interacts with FAT4 (via cytoplasmic domain). Interacts with DLL1. In terms of tissue distribution, in the brain, it is strongly expressed in the choroid plexus. Within the hippocampal formation, strongest expression was seen in the soma of CA1-4 pyramidal cells. Expressed in most neocortical regions with the strongest expression in piriform cortex and amygdaloid nuclei but also detected in the subiculum and olfactory bulb. In the cerebellum, the highest level of expression was found in Purkinje cells. Moderately expressed in the granular layer and molecular layer. Expressed in the pontine nuclei, parts of spinal trigeminal nuclei, and the principal sensory trigeminal nuclei of the metencephalon. Expressed in all thalamic and hypothalamic nuclei, and the substantia nigra (at protein level). Ubiquitously expressed.

Its subcellular location is the cell membrane. The protein localises to the apical cell membrane. The protein resides in the postsynaptic density. It localises to the cell projection. It is found in the dendrite. Its subcellular location is the cell junction. The protein localises to the tight junction. The protein resides in the synapse. It localises to the synaptosome. Member of the NMDAR signaling complex that may play a role in control of AMPAR potentiation and synaptic plasticity in excitatory synapses. Promotes clustering of HT2RC at the cell surface. The polypeptide is Multiple PDZ domain protein (Mpdz) (Mus musculus (Mouse)).